The sequence spans 106 residues: MHCDIYKFPKRSEMYVYIARPDYPNDTDEIKDWLGVLPKDLRQSLGEPKFLMHLDLAETKKLARVNKDDVIEKLQSQGYFVQTPPSDVLLAQAQARMKEGQDKRYD.

The YcgL domain maps to Met-1–Gln-94.

This chain is YcgL domain-containing protein PsycPRwf_1721, found in Psychrobacter sp. (strain PRwf-1).